A 663-amino-acid chain; its full sequence is Methionine--tRNA ligase (663 aa).

A 'HIGH' region motif is present at residues Pro-13–His-23. The Zn(2+) site is built by Cys-144, Cys-147, Cys-156, and Cys-160. Positions Lys-326–Ser-330 match the 'KMSKS' region motif. Residue Lys-329 coordinates ATP. In terms of domain architecture, tRNA-binding spans Glu-565–Arg-663.

Belongs to the class-I aminoacyl-tRNA synthetase family. MetG type 1 subfamily. As to quaternary structure, homodimer. It depends on Zn(2+) as a cofactor.

It is found in the cytoplasm. It carries out the reaction tRNA(Met) + L-methionine + ATP = L-methionyl-tRNA(Met) + AMP + diphosphate. Functionally, is required not only for elongation of protein synthesis but also for the initiation of all mRNA translation through initiator tRNA(fMet) aminoacylation. The polypeptide is Methionine--tRNA ligase (Methanosphaerula palustris (strain ATCC BAA-1556 / DSM 19958 / E1-9c)).